Reading from the N-terminus, the 756-residue chain is Hyperosmolality-gated Ca2+ permeable channel 1.5 (756 aa).

Transmembrane regions (helical) follow at residues 7 to 27, 101 to 121, 154 to 174, 373 to 393, 425 to 445, 465 to 485, 510 to 530, 574 to 594, 628 to 648, and 651 to 671; these read IGVAATINILTAFAFFIAFAI, IYLLGLKIFFPIACIAFTVMV, SRFWVHLCMAYVITFWTCFVL, LVIAVAFFFLTFFFMIPIAFV, FLPGIALKIFLIVLPSILMLM, YYMFQFINVFLCSIIAGTALQ, ATFFITYIMVDGWAGVAGEIL, FILGLVYAAVSPILLPFILVF, VVIALIVSQLLLMGLLSTKKA, and STPLLFILPVLTIGFHKFCQG. The interval 731–756 is disordered; sequence PDKTPDLVATKRGSRRFNSGSAETFT. Residues 746-756 show a composition bias toward polar residues; that stretch reads RFNSGSAETFT.

This sequence belongs to the CSC1 (TC 1.A.17) family.

Its subcellular location is the membrane. In terms of biological role, acts as an osmosensitive calcium-permeable cation channel. The polypeptide is Hyperosmolality-gated Ca2+ permeable channel 1.5 (Arabidopsis thaliana (Mouse-ear cress)).